The following is a 214-amino-acid chain: ER lumen protein-retaining receptor 3 (214 aa).

The Lumenal segment spans residues 1–4 (MNVF). The chain crosses the membrane as a helical span at residues 5-24 (RISGDVSHLLAIIILLLKMW). Over 25–32 (KSKSCAGI) the chain is Cytoplasmic. A helical membrane pass occupies residues 33–52 (SGKSQLLFALVFTTRYLDLF). The segment at 47-48 (RY) is interaction with the K-D-E-L motif on target proteins. Over 53-58 (TVFISA) the chain is Lumenal. Residues 59 to 79 (YNTVMKIVFLVCAYVTVYLIY) traverse the membrane as a helical segment. The Cytoplasmic segment spans residues 80–92 (GKFRKAYDSENDT). A helical membrane pass occupies residues 93–110 (FRLEFLLVPVIGLSFLEN). Residues 111–116 (YEFTPL) are Lumenal-facing. A helical membrane pass occupies residues 117–135 (EILWTFSIYLESVAILPQL). The Cytoplasmic segment spans residues 136–149 (FMISKTGEAESITT). A helical transmembrane segment spans residues 150-168 (HYLFFLGLYRVLYLANWIW). An interaction with the K-D-E-L motif on target proteins region spans residues 159 to 169 (RVLYLANWIWR). Residues 169-178 (RYHTEKFYDQ) are Lumenal-facing. Residues 179–199 (IAVVSGVVQTIFYFDFFYLYI) traverse the membrane as a helical segment. Over 200-214 (TKVLKGKKLSLPMPV) the chain is Cytoplasmic. Residues 204–207 (KGKK) are important for recycling of cargo proteins with the sequence motif K-D-E-L from the Golgi to the endoplasmic reticulum.

It belongs to the ERD2 family.

Its subcellular location is the endoplasmic reticulum membrane. It localises to the golgi apparatus membrane. The protein resides in the cytoplasmic vesicle. The protein localises to the COPI-coated vesicle membrane. Functionally, receptor for the C-terminal sequence motif K-D-E-L that is present on endoplasmic reticulum resident proteins and that mediates their recycling from the Golgi back to the endoplasmic reticulum. The polypeptide is ER lumen protein-retaining receptor 3 (kdelr3) (Xenopus tropicalis (Western clawed frog)).